A 246-amino-acid chain; its full sequence is Transcription factor MYB13 (246 aa).

2 HTH myb-type domains span residues 9–61 (KIGL…INYL) and 62–116 (RPDI…KKRL). DNA-binding regions (H-T-H motif) lie at residues 37-61 (WRAL…INYL) and 89-112 (WSAI…HTHL).

Expressed in roots and flowers. Expressed in shoot apex, axillary buds, at the basis of flowers and branching points of inflorescences.

It localises to the nucleus. In terms of biological role, plays a regulatory role in meristem function. Functions as component of a regulatory network controlling the establishment and/or development of the shoot system by the regulation of apical meristem function. May play a role in tolerance to boric acid. This chain is Transcription factor MYB13, found in Arabidopsis thaliana (Mouse-ear cress).